The sequence spans 158 residues: MSSAIERKSLDPADEPVDEVLQIPPSLLTCGGCQQSIGDRYFLKAIDQYWHEDCLSCDLCGCRLGEVGRRLYYKLGRKLCRRDYLRLFGQDGLCASCDNRIRAYEMTMRVKDKVYHLECFKCAACQKHFCVGDRYLLINSDIVCEQDIYEWTKLSEMM.

2 LIM zinc-binding domains span residues 28–90 and 92–154; these read LTCG…LFGQ and GLCA…WTKL.

Expression becomes restricted to the ventral blood island (VBI) as the embryo develops. In late neurula and early tailbud embryos, also expressed in the dorsal lateral plate (DLP), the site of definitive hematopoiesis in the tadpole. Expression in the DLP diminishes during tailbud stages. Expressed in circulating blood cells of tadpoles. Also expressed in non-hematopoietic sites, including the tailbud region and the central nervous system of early neurula embryos.

It is found in the nucleus. Transcription factor that acts synergistically with tal1/scl and gata1 to specify embryonic dorsal mesoderm to a hematopoietic fate. Induces globin gene expression together with fgf. This Xenopus laevis (African clawed frog) protein is Rhombotin-2.